The chain runs to 375 residues: Protein HrmA (375 aa).

Its function is as follows. Unknown. May serve a regulatory function. The sequence is that of Protein HrmA (hrmA) from Pseudomonas syringae pv. syringae.